We begin with the raw amino-acid sequence, 248 residues long: Ubiquinone/menaquinone biosynthesis C-methyltransferase UbiE (248 aa).

2 residues coordinate S-adenosyl-L-methionine: S68 and D92.

It belongs to the class I-like SAM-binding methyltransferase superfamily. MenG/UbiE family.

It catalyses the reaction a 2-demethylmenaquinol + S-adenosyl-L-methionine = a menaquinol + S-adenosyl-L-homocysteine + H(+). It carries out the reaction a 2-methoxy-6-(all-trans-polyprenyl)benzene-1,4-diol + S-adenosyl-L-methionine = a 5-methoxy-2-methyl-3-(all-trans-polyprenyl)benzene-1,4-diol + S-adenosyl-L-homocysteine + H(+). Its pathway is quinol/quinone metabolism; menaquinone biosynthesis; menaquinol from 1,4-dihydroxy-2-naphthoate: step 2/2. It functions in the pathway cofactor biosynthesis; ubiquinone biosynthesis. Its function is as follows. Methyltransferase required for the conversion of demethylmenaquinol (DMKH2) to menaquinol (MKH2) and the conversion of 2-polyprenyl-6-methoxy-1,4-benzoquinol (DDMQH2) to 2-polyprenyl-3-methyl-6-methoxy-1,4-benzoquinol (DMQH2). The sequence is that of Ubiquinone/menaquinone biosynthesis C-methyltransferase UbiE from Rickettsia africae (strain ESF-5).